Consider the following 306-residue polypeptide: Protoheme IX farnesyltransferase (306 aa).

Transmembrane regions (helical) follow at residues 32 to 52 (VVALLVLTALVGMSLSVPGAL), 58 to 78 (IPAMLGIGLLSSAAAAINHIV), 103 to 123 (NAIVFATSIALLGFIILYALV), 126 to 146 (LTAFLTLAGLVGYSFVYTMYL), 153 to 173 (NITIGGLAGAIPPLLGWTAMT), 180 to 200 (ALLLVLIIFTWTPPHFWALAI), 227 to 247 (ILLYTVLLFVVCLLPYLVGMS), 249 to 269 (WLYLIGACSLNLIFFGYAWQL), and 278 to 298 (AMATFKFSIIHLMLLFIILLL).

The protein belongs to the UbiA prenyltransferase family. Protoheme IX farnesyltransferase subfamily.

Its subcellular location is the cell inner membrane. The catalysed reaction is heme b + (2E,6E)-farnesyl diphosphate + H2O = Fe(II)-heme o + diphosphate. It functions in the pathway porphyrin-containing compound metabolism; heme O biosynthesis; heme O from protoheme: step 1/1. Its function is as follows. Converts heme B (protoheme IX) to heme O by substitution of the vinyl group on carbon 2 of heme B porphyrin ring with a hydroxyethyl farnesyl side group. The polypeptide is Protoheme IX farnesyltransferase (Colwellia psychrerythraea (strain 34H / ATCC BAA-681) (Vibrio psychroerythus)).